The chain runs to 505 residues: Prenylcysteine oxidase 1 (505 aa).

The first 28 residues, 1–28, serve as a signal peptide directing secretion; the sequence is MGRFAAALVGSLFWLGLLLCGLGSLASA. Asn196, Asn323, and Asn353 each carry an N-linked (GlcNAc...) asparagine glycan.

The protein belongs to the prenylcysteine oxidase family. It depends on FAD as a cofactor. In terms of tissue distribution, highly expressed in the liver, kidney, heart and brain.

Its subcellular location is the lysosome. The enzyme catalyses an S-polyprenyl-L-cysteine + O2 + H2O = a polyprenal + L-cysteine + H2O2. The catalysed reaction is S-(2E,6E)-farnesyl-L-cysteine + O2 + H2O = (2E,6E)-farnesal + L-cysteine + H2O2. It catalyses the reaction [(2E,6E,10E)-geranylgeranyl]-L-cysteine + O2 + H2O = (2E,6E,10E)-geranylgeranial + L-cysteine + H2O2. Prenylcysteine oxidase that cleaves the thioether bond of prenyl-L-cysteines, such as farnesylcysteine and geranylgeranylcysteine. Only active against free prenylcysteines and not prenylcysteine residues within prenylated proteins or peptides. Involved in the final step in the degradation of prenylated proteins, by degrading prenylcysteines after the protein has been degraded. This chain is Prenylcysteine oxidase 1, found in Mus musculus (Mouse).